The following is a 337-amino-acid chain: Diacylglycerol acyltransferase/mycolyltransferase Ag85A (337 aa).

A signal peptide spans 1–42 (MKLVDRFRGAATGTSRRLMVGAVGAALLSGLVGFVGGSATAS). 85–86 (MR) contacts substrate. The tract at residues 101–111 (FEWYYQSGISV) is fibronectin-binding. A disulfide bridge connects residues Cys130 and Cys135. Ser169 and Asp197 together coordinate substrate. Ser169 serves as the catalytic Nucleophile. Glu273 is an active-site residue. Substrate contacts are provided by residues 275-278 (FVRT), Lys282, and 305-307 (HSW). His305 is an active-site residue.

It belongs to the mycobacterial A85 antigen family. Homodimer.

Its subcellular location is the secreted. It is found in the cell wall. It localises to the cytoplasm. It catalyses the reaction an acyl-CoA + a 1,2-diacyl-sn-glycerol = a triacyl-sn-glycerol + CoA. It carries out the reaction 2 alpha,alpha'-trehalose 6-mycolate = alpha,alpha'-trehalose 6,6'-bismycolate + alpha,alpha-trehalose. Functionally, the antigen 85 proteins (FbpA, FbpB, FbpC) are responsible for the high affinity of mycobacteria for fibronectin, a large adhesive glycoprotein, which facilitates the attachment of M.tuberculosis to murine alveolar macrophages (AMs). They also help to maintain the integrity of the cell wall by catalyzing the transfer of mycolic acids to cell wall arabinogalactan, and through the synthesis of alpha,alpha-trehalose dimycolate (TDM, cord factor). They catalyze the transfer of a mycoloyl residue from one molecule of alpha,alpha-trehalose monomycolate (TMM) to another TMM, leading to the formation of TDM. FbpA mediates triacylglycerol (TAG) formation with long-chain acyl-CoA as the acyl donor and 1,2-dipalmitoyl-sn-glycerol (1,2-dipalmitin) as the acyl acceptor. It has a preference for C26:0-CoA over C18:1-CoA. This chain is Diacylglycerol acyltransferase/mycolyltransferase Ag85A (fbpA), found in Mycobacterium ulcerans.